The sequence spans 91 residues: Large ribosomal subunit protein bL27 (91 aa).

Residues 1-25 (MAHKKGAASSNNGRDSESKRLGVKR) are disordered.

The protein belongs to the bacterial ribosomal protein bL27 family.

The polypeptide is Large ribosomal subunit protein bL27 (Corynebacterium kroppenstedtii (strain DSM 44385 / JCM 11950 / CIP 105744 / CCUG 35717)).